Here is a 399-residue protein sequence, read N- to C-terminus: Ankyrin repeat domain-containing protein 65 (399 aa).

ANK repeat units lie at residues glutamine 40–glutamate 69, alanine 73–alanine 102, alanine 106–alanine 135, threonine 139–alanine 168, arginine 176–glycine 205, leucine 207–alanine 231, alanine 235–isoleucine 264, histidine 268–alanine 297, leucine 301–alanine 330, and leucine 334–leucine 363. A disordered region spans residues aspartate 377–glycine 399.

This Homo sapiens (Human) protein is Ankyrin repeat domain-containing protein 65 (ANKRD65).